An 832-amino-acid chain; its full sequence is Putative pentatricopeptide repeat-containing protein At5g08310, mitochondrial (832 aa).

A mitochondrion-targeting transit peptide spans 1–27 (MAFSRIALLCQRFSRQQQQRQLLHRPL). 19 PPR repeats span residues 105 to 139 (DMYAYNAMASILSRARQNASLKALVVDVLNSRCFM), 140 to 174 (SPGAFGFFIRCLGNAGLVDEASSVFDRVREMGLCV), 176 to 212 (NAYTYNCLLEAISKSNSSSVELVEARLKEMRDCGFHF), 213 to 247 (DKFTLTPVLQVYCNTGKSERALSVFNEILSRGWLD), 252 to 281 (TILVVSFCKWGQVDKAFELIEMLEERDIRL), 282 to 316 (NYKTYCVLIHGFVKESRIDKAFQLFEKMRRMGMNA), 317 to 351 (DIALYDVLIGGLCKHKDLEMALSLYLEIKRSGIPP), 352 to 383 (DRGILGKLLCSFSEESELSRITEVIIGDIDKK), 385 to 415 (VMLLYKSLFEGFIRNDLVHEAYSFIQNLMGN), 438 to 472 (DSDSLSIVINCLVKANKVDMAVTLLHDIVQNGLIP), 473 to 507 (GPMMYNNIIEGMCKEGRSEESLKLLGEMKDAGVEP), 508 to 542 (SQFTLNCIYGCLAERCDFVGALDLLKKMRFYGFEP), 543 to 577 (WIKHTTFLVKKLCENGRAVDACKYLDDVAGEGFLG), 578 to 612 (HMVASTAAIDGLIKNEGVDRGLELFRDICANGHCP), 613 to 647 (DVIAYHVLIKALCKACRTMEADILFNEMVSKGLKP), 648 to 682 (TVATYNSMIDGWCKEGEIDRGLSCIVRMYEDEKNP), 683 to 717 (DVITYTSLIHGLCASGRPSEAIFRWNEMKGKDCYP), 718 to 752 (NRITFMALIQGLCKCGWSGEALVYFREMEEKEMEP), and 753 to 787 (DSAVYLSLVSSFLSSENINAGFGIFREMVHKGRFP).

Belongs to the PPR family. P subfamily.

It localises to the mitochondrion. The protein is Putative pentatricopeptide repeat-containing protein At5g08310, mitochondrial of Arabidopsis thaliana (Mouse-ear cress).